The primary structure comprises 277 residues: Large ribosomal subunit protein uL2 (277 aa).

A disordered region spans residues 218 to 277; the sequence is PTVRGSVMNPNDHPHGGGEGKAPVGRKAPSTPWGKPALGLKTRNKKAKSDKLIVRRRNEK. Over residues 264 to 277 the composition is skewed to basic and acidic residues; it reads AKSDKLIVRRRNEK.

Belongs to the universal ribosomal protein uL2 family. Part of the 50S ribosomal subunit. Forms a bridge to the 30S subunit in the 70S ribosome.

One of the primary rRNA binding proteins. Required for association of the 30S and 50S subunits to form the 70S ribosome, for tRNA binding and peptide bond formation. It has been suggested to have peptidyltransferase activity; this is somewhat controversial. Makes several contacts with the 16S rRNA in the 70S ribosome. This is Large ribosomal subunit protein uL2 from Streptococcus pyogenes serotype M4 (strain MGAS10750).